The primary structure comprises 1548 residues: UDP-glucose:glycoprotein glucosyltransferase (1548 aa).

Positions 1 to 22 (MLRAVALCVSVVLIALYTPTSG) are cleaved as a signal peptide. Residue asparagine 181 is glycosylated (N-linked (GlcNAc...) asparagine). Basic and acidic residues predominate over residues 243–253 (TEYKSQDDAPK). Residues 243–265 (TEYKSQDDAPKPEAGSTSDEDLA) form a disordered region. 2 N-linked (GlcNAc...) asparagine glycosylation sites follow: asparagine 266 and asparagine 864. Positions 1227-1548 (SANQAATDED…PSHEPKHGEL (322 aa)) are glucosyltransferase. Over residues 1512-1523 (EDHENSHSRDSA) the composition is skewed to basic and acidic residues. Residues 1512-1548 (EDHENSHSRDSAVDDSVDDSVEVTTVTPSHEPKHGEL) form a disordered region. The Prevents secretion from ER signature appears at 1545–1548 (HGEL).

The protein belongs to the glycosyltransferase 8 family. As to quaternary structure, monomer. May interact with CG7484/Sep15. Requires Ca(2+) as cofactor. Mn(2+) serves as cofactor.

It is found in the endoplasmic reticulum lumen. The protein resides in the endoplasmic reticulum-Golgi intermediate compartment. It catalyses the reaction N(4)-(alpha-D-Man-(1-&gt;2)-alpha-D-Man-(1-&gt;2)-alpha-D-Man-(1-&gt;3)-[alpha-D-Man-(1-&gt;2)-alpha-D-Man-(1-&gt;3)-[alpha-D-Man-(1-&gt;2)-alpha-D-Man-(1-&gt;6)]-alpha-D-Man-(1-&gt;6)]-beta-D-Man-(1-&gt;4)-beta-D-GlcNAc-(1-&gt;4)-beta-D-GlcNAc)-L-asparaginyl-[protein] (N-glucan mannose isomer 9A1,2,3B1,2,3) + UDP-alpha-D-glucose = N(4)-(alpha-D-Glc-(1-&gt;3)-alpha-D-Man-(1-&gt;2)-alpha-D-Man-(1-&gt;2)-alpha-D-Man-(1-&gt;3)-[alpha-D-Man-(1-&gt;2)-alpha-D-Man-(1-&gt;3)-[alpha-D-Man-(1-&gt;2)-alpha-D-Man-(1-&gt;6)]-alpha-D-Man-(1-&gt;6)]-beta-D-Man-(1-&gt;4)-beta-D-GlcNAc-(1-&gt;4)-beta-D-GlcNAc)-L-asparaginyl-[protein] + UDP + H(+). The protein operates within protein modification; protein glycosylation. Its function is as follows. Recognizes glycoproteins with minor folding defects. Reglucosylates single N-glycans near the misfolded part of the protein, thus providing quality control for protein folding in the endoplasmic reticulum. Reglucosylated proteins are recognized by calreticulin for recycling to the endoplasmic reticulum and refolding or degradation. The chain is UDP-glucose:glycoprotein glucosyltransferase from Drosophila melanogaster (Fruit fly).